The sequence spans 167 residues: Endothelin-3 (167 aa).

The signal sequence occupies residues 1 to 19; it reads MELGLWLLLGLTVTSAAAA. The propeptide occupies 20–50; that stretch reads LPAQPGNAGQERGPGRSGDQEEKRVPAHHRP. Positions 22–45 are disordered; that stretch reads AQPGNAGQERGPGRSGDQEEKRVP. 2 cysteine pairs are disulfide-bonded: cysteine 53/cysteine 67 and cysteine 55/cysteine 63. Residues 74–167 constitute a propeptide that is removed on maturation; the sequence is INTPEQTVPY…KSRTDKVHQP (94 aa). The tract at residues 85–112 is disordered; it reads LSNHRGSLRGKRSSGPVPESSQSSPQTR. Residues 97–109 are compositionally biased toward low complexity; sequence SSGPVPESSQSSP. The endothelin-like stretch occupies residues 115 to 135; that stretch reads CACSGVDDKACAYFCAHVTSY. The span at 140 to 149 shows a compositional bias: basic and acidic residues; the sequence is EKAAAEEKQE. The disordered stretch occupies residues 140-167; sequence EKAAAEEKQETGGPRQRLKSRTDKVHQP.

This sequence belongs to the endothelin/sarafotoxin family.

Its subcellular location is the secreted. Endothelins are endothelium-derived vasoconstrictor peptides. This Rattus norvegicus (Rat) protein is Endothelin-3 (Edn3).